The primary structure comprises 282 residues: Bifunctional protein FolD (282 aa).

NADP(+) contacts are provided by residues 164 to 166 (GRS) and serine 189.

The protein belongs to the tetrahydrofolate dehydrogenase/cyclohydrolase family. As to quaternary structure, homodimer.

The catalysed reaction is (6R)-5,10-methylene-5,6,7,8-tetrahydrofolate + NADP(+) = (6R)-5,10-methenyltetrahydrofolate + NADPH. The enzyme catalyses (6R)-5,10-methenyltetrahydrofolate + H2O = (6R)-10-formyltetrahydrofolate + H(+). It participates in one-carbon metabolism; tetrahydrofolate interconversion. Functionally, catalyzes the oxidation of 5,10-methylenetetrahydrofolate to 5,10-methenyltetrahydrofolate and then the hydrolysis of 5,10-methenyltetrahydrofolate to 10-formyltetrahydrofolate. The sequence is that of Bifunctional protein FolD from Lachnoclostridium phytofermentans (strain ATCC 700394 / DSM 18823 / ISDg) (Clostridium phytofermentans).